A 116-amino-acid chain; its full sequence is Large ribosomal subunit protein bL19 (116 aa).

Belongs to the bacterial ribosomal protein bL19 family.

Its function is as follows. This protein is located at the 30S-50S ribosomal subunit interface and may play a role in the structure and function of the aminoacyl-tRNA binding site. The polypeptide is Large ribosomal subunit protein bL19 (Haemophilus ducreyi (strain 35000HP / ATCC 700724)).